Consider the following 2142-residue polypeptide: U5 small nuclear ribonucleoprotein 200 kDa helicase (2142 aa).

3 disordered regions span residues 52–74, 211–234, and 366–396; these read MGDR…RQKR, EESE…QDEG, and RQLD…DGGA. Basic and acidic residues predominate over residues 369 to 391; the sequence is DTGKSEDQEEGEARGSKRGKGDA. Residues 490 to 673 form the Helicase ATP-binding 1 domain; that stretch reads KAALDSDENM…FLRVKPDKGL (184 aa). 503 to 510 contributes to the ATP binding site; sequence APTGAGKT. Positions 615-618 match the DEIH box motif; it reads DEIH. The Helicase C-terminal 1 domain occupies 684–917; sequence SLEQQYIGVT…GTVQHLQDAV (234 aa). The region spanning 981–1286 is the SEC63 1 domain; that stretch reads VTDLGRIASH…GAETQLPVSF (306 aa). Residues 1337 to 1511 form the Helicase ATP-binding 2 domain; that stretch reads NAVYNSDENV…WLGCNPNATF (175 aa). 1350–1357 contacts ATP; sequence APTGSGKM. Positions 1453 to 1456 match the DELQ box motif; the sequence is DELQ. One can recognise a Helicase C-terminal 2 domain in the interval 1544 to 1752; it reads PVYNAILKYS…TIENKQDAVD (209 aa). In terms of domain architecture, SEC63 2 spans 1811 to 2128; it reads PLNLGMIAAY…GCDQEYKFSI (318 aa).

The protein belongs to the helicase family. SKI2 subfamily.

It is found in the nucleus. It carries out the reaction ATP + H2O = ADP + phosphate + H(+). In terms of biological role, catalyzes the ATP-dependent unwinding of U4/U6 RNA duplices, an essential step in the assembly of a catalytically active spliceosome. Plays a role in pre-mRNA splicing. This Drosophila melanogaster (Fruit fly) protein is U5 small nuclear ribonucleoprotein 200 kDa helicase.